The chain runs to 657 residues: Probable Xaa-Pro aminopeptidase P (657 aa).

Residues D453, D464, E562, and E576 each contribute to the Mn(2+) site.

It belongs to the peptidase M24B family. The cofactor is Mn(2+).

The enzyme catalyses Release of any N-terminal amino acid, including proline, that is linked to proline, even from a dipeptide or tripeptide.. Functionally, catalyzes the removal of a penultimate prolyl residue from the N-termini of peptides. This is Probable Xaa-Pro aminopeptidase P (ampp) from Talaromyces marneffei (strain ATCC 18224 / CBS 334.59 / QM 7333) (Penicillium marneffei).